The sequence spans 501 residues: Membrane-bound lytic murein transglycosylase F (501 aa).

An N-terminal signal peptide occupies residues 1-29; the sequence is MTKILLNTASTVLTRLWKLSLLGLVFAVA. The non-LT domain stretch occupies residues 30–274; the sequence is AATLVSSRIP…DAMETFYGHL (245 aa). The interval 275-501 is LT domain; it reads GEIDYSGAIL…VKSISGTSSL (227 aa). E321 is an active-site residue.

In the N-terminal section; belongs to the bacterial solute-binding protein 3 family. It in the C-terminal section; belongs to the transglycosylase Slt family.

The protein resides in the cell outer membrane. It carries out the reaction Exolytic cleavage of the (1-&gt;4)-beta-glycosidic linkage between N-acetylmuramic acid (MurNAc) and N-acetylglucosamine (GlcNAc) residues in peptidoglycan, from either the reducing or the non-reducing ends of the peptidoglycan chains, with concomitant formation of a 1,6-anhydrobond in the MurNAc residue.. Its function is as follows. Murein-degrading enzyme that degrades murein glycan strands and insoluble, high-molecular weight murein sacculi, with the concomitant formation of a 1,6-anhydromuramoyl product. Lytic transglycosylases (LTs) play an integral role in the metabolism of the peptidoglycan (PG) sacculus. Their lytic action creates space within the PG sacculus to allow for its expansion as well as for the insertion of various structures such as secretion systems and flagella. The chain is Membrane-bound lytic murein transglycosylase F from Saccharophagus degradans (strain 2-40 / ATCC 43961 / DSM 17024).